Here is a 641-residue protein sequence, read N- to C-terminus: Epithelial sodium channel subunit beta (641 aa).

The Cytoplasmic portion of the chain corresponds to 1–50 (MHLKKYLLKGLHRLQKGPGYSYKELLVWYCNNTNTHGPKRIICEGPKKKA). A helical transmembrane segment spans residues 51–71 (MWFLITLLFTSLVCWQWGVFI). Residues 72–533 (RTYLSWEVSV…GGQFGFWMGG (462 aa)) lie on the Extracellular side of the membrane. 9 disulfides stabilise this stretch: Cys98–Cys273, Cys185–Cys190, Cys197–Cys204, Cys250–Cys257, Cys362–Cys449, Cys387–Cys445, Cys391–Cys441, Cys400–Cys427, and Cys402–Cys416. An N-linked (GlcNAc...) asparagine glycan is attached at Asn141. The N-linked (GlcNAc...) asparagine glycan is linked to Asn261. A helical transmembrane segment spans residues 534–554 (SVLCLIEFGEILIDFVWITII). At 555 to 641 (KLVAFAKSLR…IESDSEGDAI (87 aa)) the chain is on the cytoplasmic side. Positions 593–624 (PDVARPGPDPGTYPDEQTLPIPGTPPPNYDSL) are disordered. The PY motif; recruits WW domain-containing proteins and is thereby required for ubiquitination and inhibition of the channel by NEDD4 and NEDD4L motif lies at 617–621 (PPPNY). Residues Ser634 and Ser636 each carry the phosphoserine modification.

This sequence belongs to the amiloride-sensitive sodium channel (TC 1.A.6) family. SCNN1B subfamily. As to quaternary structure, component of the heterotrimeric epithelial sodium channel (ENaC) composed of an alpha/SCNN1A, a beta/SCNN1B and a gamma/SCNN1G subunit. An additional delta/SCNN1D subunit can replace the alpha/SCNN1A subunit to form an alternative channel with specific properties. Interacts with WWP1 (via WW domains). Interacts with WWP2 (via WW domains); inhibits the channel. Interacts with the full-length immature form of PCSK9 (pro-PCSK9). Interacts (N-glycosylated) with BPIFA1; the interaction is direct and inhibits the proteolytic processing of SCNN1A and SCNN1G and the activation of ENaC. Ubiquitinated. Can be ubiquitinated at multiple sites and undergo monoubiquitination and polyubiquitination. Ubiquitination by NEDD4 or NEDD4L inhibits the ENaC channel through endocytosis, intracellular retention and degradation of its individual subunits. However, some studies could not confirm the ubiquitination of this subunit of the ENaC. Post-translationally, phosphorylated on serine and threonine residues. Aldosterone and insulin increase the basal level of phosphorylation. In terms of processing, N-glycosylated. N-glycosylation is required for interaction with BPIFA1.

It is found in the apical cell membrane. Its subcellular location is the cytoplasmic vesicle membrane. It carries out the reaction Na(+)(in) = Na(+)(out). With respect to regulation, originally identified and characterized by its inhibition by the diuretic drug amiloride. Its function is as follows. This is one of the three pore-forming subunits of the heterotrimeric epithelial sodium channel (ENaC), a critical regulator of sodium balance and fluid homeostasis. ENaC operates in epithelial tissues, where it mediates the electrodiffusion of sodium ions from extracellular fluid through the apical membrane of cells, with water following osmotically. It plays a key role in maintaining sodium homeostasis through electrogenic sodium reabsorption in the kidneys. Additionally, ENaC is essential for airway surface liquid homeostasis, which is crucial for proper mucus clearance. The sequence is that of Epithelial sodium channel subunit beta from Canis lupus familiaris (Dog).